The sequence spans 740 residues: Ion-translocating oxidoreductase complex subunit C (740 aa).

4Fe-4S ferredoxin-type domains lie at 369-397 (GEPQEEQSCIRCSACADACPADLLPQQLY) and 407-436 (KATTHNIADCIECGACAWVCPSNIPLVQYF). 8 residues coordinate [4Fe-4S] cluster: Cys377, Cys380, Cys383, Cys387, Cys416, Cys419, Cys422, and Cys426. The interval 602 to 714 (KLEQQQANAE…NAEPEEQIDP (113 aa)) is disordered. Residues 605-615 (QQQANAEPEQQ) are compositionally biased toward low complexity.

Belongs to the 4Fe4S bacterial-type ferredoxin family. RnfC subfamily. As to quaternary structure, the complex is composed of six subunits: RsxA, RsxB, RsxC, RsxD, RsxE and RsxG. Requires [4Fe-4S] cluster as cofactor.

The protein localises to the cell inner membrane. Part of a membrane-bound complex that couples electron transfer with translocation of ions across the membrane. Required to maintain the reduced state of SoxR. The sequence is that of Ion-translocating oxidoreductase complex subunit C from Escherichia coli O17:K52:H18 (strain UMN026 / ExPEC).